We begin with the raw amino-acid sequence, 140 residues long: Arsenate reductase (140 aa).

C11 serves as the catalytic Nucleophile; cysteine thioarsenate intermediate.

Belongs to the ArsC family.

The catalysed reaction is [glutaredoxin]-dithiol + arsenate + glutathione + H(+) = glutathionyl-S-S-[glutaredoxin] + arsenite + H2O. Its function is as follows. Involved in resistance to arsenate. Catalyzes the reduction of arsenate [As(V)] to arsenite [As(III)]. The resulting arsenite is then extruded from the cell via the aquaglyceroporin AqpS. Does not display antimonate reductase activity. In Rhizobium meliloti (strain 1021) (Ensifer meliloti), this protein is Arsenate reductase.